Consider the following 42-residue polypeptide: MRNFEKMTKRSNRNARDFEATKGRKLNKTKRDRSHKRSWEGQ.

Positions 1 to 22 (MRNFEKMTKRSNRNARDFEATK) are enriched in basic and acidic residues. The interval 1-42 (MRNFEKMTKRSNRNARDFEATKGRKLNKTKRDRSHKRSWEGQ) is disordered. The span at 23–36 (GRKLNKTKRDRSHK) shows a compositional bias: basic residues.

This is an uncharacterized protein from Escherichia phage T7 (Bacteriophage T7).